The primary structure comprises 423 residues: Heat shock transcription factor, X-linked (423 aa).

Residues 1-25 (MEDKRSLSMARCEERNSRGQDHGLE) show a composition bias toward basic and acidic residues. Disordered regions lie at residues 1 to 56 (MEDK…STGS), 215 to 303 (KSAP…EGSQ), and 397 to 423 (PHSH…DQST). The DNA-binding element occupies 98-282 (PFPQKLWRLV…PATPVMVPDS (185 aa)). A Glycyl lysine isopeptide (Lys-Gly) (interchain with G-Cter in SUMO1) cross-link involves residue Lys215. Positions 243–254 (HTSPNENDQVTP) are enriched in polar residues.

It belongs to the HSF family. As to expression, testis-specific.

The protein resides in the nucleus. The protein localises to the cytoplasm. In Homo sapiens (Human), this protein is Heat shock transcription factor, X-linked (HSFX1).